The following is a 160-amino-acid chain: Ribosomal RNA large subunit methyltransferase H (160 aa).

2 residues coordinate S-adenosyl-L-methionine: Leu76 and Gly108.

Belongs to the RNA methyltransferase RlmH family. As to quaternary structure, homodimer.

The protein resides in the cytoplasm. The enzyme catalyses pseudouridine(1915) in 23S rRNA + S-adenosyl-L-methionine = N(3)-methylpseudouridine(1915) in 23S rRNA + S-adenosyl-L-homocysteine + H(+). Functionally, specifically methylates the pseudouridine at position 1915 (m3Psi1915) in 23S rRNA. The sequence is that of Ribosomal RNA large subunit methyltransferase H from Nitrobacter winogradskyi (strain ATCC 25391 / DSM 10237 / CIP 104748 / NCIMB 11846 / Nb-255).